Consider the following 241-residue polypeptide: Nopaline transport system permease protein NocM (241 aa).

In terms of domain architecture, ABC transmembrane type-1 spans 17-215 (VPTTLTLAFI…FITFVVSRLV (199 aa)). The next 5 membrane-spanning stretches (helical) occupy residues 21–41 (LTLAFISLLIGFVVSVPVALM), 52–72 (LAYGYVYIIRSTPLLVQMFLI), 95–115 (PWFCAILALALNTAAYTSEII), 161–181 (VMLIIKSTSLASTITIVEVTG), and 191–211 (YSPVEVFIVAGAIYLFITFVV).

The protein belongs to the binding-protein-dependent transport system permease family. HisMQ subfamily.

It is found in the cell inner membrane. Functionally, component of the nopaline active transport system probably consisting of four subunits: Q, M, P and T. This system is also capable of transporting octopine provided that catabolic functions are induced with nopaline. The sequence is that of Nopaline transport system permease protein NocM (nocM) from Agrobacterium fabrum (strain C58 / ATCC 33970) (Agrobacterium tumefaciens (strain C58)).